The following is a 530-amino-acid chain: BTB/POZ domain-containing protein 3 (530 aa).

The segment at 23 to 48 (KNRSKKGSKKANSSGGGGGGGSVGSG) is disordered. The span at 36–46 (SGGGGGGGSVG) shows a compositional bias: gly residues. The 71-residue stretch at 128-198 (ADVHFVVGPP…IYCDEIDLAA (71 aa)) folds into the BTB domain. The region spanning 243–308 (FEEPDLTQRC…NWAEVECQRQ (66 aa)) is the BACK domain.

In terms of tissue distribution, in the somatosensory cortex, specifically expressed in spiny stellate neurons during barrel formation. Also expressed in the olfactory bulb, piriform cortex and hippocampus.

The protein localises to the cytoplasm. It is found in the cytosol. The protein resides in the nucleus. Functionally, acts as a key regulator of dendritic field orientation during development of sensory cortex. Also directs dendrites toward active axon terminals when ectopically expressed. The protein is BTB/POZ domain-containing protein 3 (Btbd3) of Mus musculus (Mouse).